Here is a 248-residue protein sequence, read N- to C-terminus: Probable transcriptional regulatory protein Fphi_1565 (248 aa).

Belongs to the TACO1 family.

It localises to the cytoplasm. This is Probable transcriptional regulatory protein Fphi_1565 from Francisella philomiragia subsp. philomiragia (strain ATCC 25017 / CCUG 19701 / FSC 153 / O#319-036).